The following is a 421-amino-acid chain: Chitin deacetylase (421 aa).

Positions 1–21 (MQIKTFALSAAIAQVATLALA) are cleaved as a signal peptide. N39, N70, N87, and N106 each carry an N-linked (GlcNAc...) asparagine glycan. The NodB homology domain occupies 157 to 349 (ETWGLTYDDG…YKQVIDVATC (193 aa)). The active-site Proton acceptor is D164. Residue D164 participates in acetate binding. A Co(2+)-binding site is contributed by D165. Residue N168 is glycosylated (N-linked (GlcNAc...) asparagine). Co(2+)-binding residues include H214 and H218. Y255 is a binding site for acetate. N-linked (GlcNAc...) asparagine glycosylation occurs at N307. H320 functions as the Proton donor in the catalytic mechanism. N323, N351, and N367 each carry an N-linked (GlcNAc...) asparagine glycan. A lipid anchor (GPI-anchor amidated threonine) is attached at T390. A propeptide spans 391 to 421 (AAAHIQASTSGAMSVLPNLALISAFIATLLF) (removed in mature form).

The protein belongs to the polysaccharide deacetylase family. Requires Co(2+) as cofactor.

Its subcellular location is the secreted. It localises to the cell wall. It is found in the cell membrane. The catalysed reaction is [(1-&gt;4)-N-acetyl-beta-D-glucosaminyl](n) + n H2O = chitosan + n acetate. Hydrolyzes the N-acetamido groups of N-acetyl-D-glucosamine residues in chitin to form chitosan and acetate. In Amylomyces rouxii (Filamentous fungus), this protein is Chitin deacetylase.